We begin with the raw amino-acid sequence, 262 residues long: MLERMQEALQRLRKERPVILNTTNYVSMDFLANCFLAIGASPIMSVSDLELEELIELSSAVYINIGTLDHLFIQRAYRTVDLAVRQNKPVIFDPVAAGATKIRTEVSHHLLAHATIVRGNASEILSFGDVTMKTRGVDSTHSTQDAKDVATALAKECLCGCAIAVSGAIDFITDGQRHTTVELGDPFMSYVVGMGCSLTGVFAAFRSVIDDSFEATKLGIEYFTLCGMLARERCEGPGLFKAYLLDELYASDFSRMRQYYDR.

Residue M44 participates in substrate binding. 2 residues coordinate ATP: R118 and S166. G193 contacts substrate.

It belongs to the Thz kinase family. Requires Mg(2+) as cofactor.

It catalyses the reaction 5-(2-hydroxyethyl)-4-methylthiazole + ATP = 4-methyl-5-(2-phosphooxyethyl)-thiazole + ADP + H(+). It participates in cofactor biosynthesis; thiamine diphosphate biosynthesis; 4-methyl-5-(2-phosphoethyl)-thiazole from 5-(2-hydroxyethyl)-4-methylthiazole: step 1/1. In terms of biological role, catalyzes the phosphorylation of the hydroxyl group of 4-methyl-5-beta-hydroxyethylthiazole (THZ). The protein is Hydroxyethylthiazole kinase of Chlamydia abortus (strain DSM 27085 / S26/3) (Chlamydophila abortus).